A 239-amino-acid chain; its full sequence is Ribosomal RNA small subunit methyltransferase G (239 aa).

Residues Gly-77, Phe-82, 128 to 129, and Arg-146 contribute to the S-adenosyl-L-methionine site; that span reads AE. The interval 215-239 is disordered; sequence DKKRQTPKKYPRKPGTPNKTPLLEK.

It belongs to the methyltransferase superfamily. RNA methyltransferase RsmG family.

The protein localises to the cytoplasm. Functionally, specifically methylates the N7 position of guanine in position 535 of 16S rRNA. The polypeptide is Ribosomal RNA small subunit methyltransferase G (Staphylococcus aureus (strain USA300)).